Consider the following 1288-residue polypeptide: Symplekin (1288 aa).

The interval 1 to 124 (MASSSGDSVT…NMLLRDENVN (124 aa)) is interaction with HSF1. Ser-13 is subject to Phosphoserine. HEAT repeat units follow at residues 31–64 (TTSERVVDLLNQAALITNDSKITVLKQVQELIIN), 67–101 (PTLLDNFLDEIIAFQADKSIEVRKFVIGFIEEACK), 104–146 (IELL…WMVK), 153–192 (LQEACWDMVSSMAGEIILLLDSDNDGIRTHAIKFVEGLIV), and 227–266 (VLWEEGKAAVEQLLKFMVHPAISSINLTTALGSLANIARQ). Residues 335–392 (IARNMPSSKDSRKRPRDDTDSTLKKMKLEPNLGEDDEDKDLEPGPSGTSKASAQISGQ) are disordered. Positions 345-360 (SRKRPRDDTDSTLKKM) match the Nuclear localization signal motif. Positions 349-362 (PRDDTDSTLKKMKL) are enriched in basic and acidic residues. A Glycyl lysine isopeptide (Lys-Gly) (interchain with G-Cter in SUMO1); alternate cross-link involves residue Lys-361. Lys-361 is covalently cross-linked (Glycyl lysine isopeptide (Lys-Gly) (interchain with G-Cter in SUMO2); alternate). The span at 380 to 392 (SGTSKASAQISGQ) shows a compositional bias: polar residues. Lys-483 participates in a covalent cross-link: Glycyl lysine isopeptide (Lys-Gly) (interchain with G-Cter in SUMO2). Ser-494 bears the Phosphoserine mark. Disordered regions lie at residues 1130–1151 (PAPAPAPAPAPAPAPAPRPPQD) and 1163–1288 (LKRQ…KGNS). Pro residues predominate over residues 1131-1149 (APAPAPAPAPAPAPAPRPP). The segment covering 1163 to 1173 (LKRQLEEEQKQ) has biased composition (basic and acidic residues). Phosphoserine is present on residues Ser-1238 and Ser-1239. Residue Lys-1256 forms a Glycyl lysine isopeptide (Lys-Gly) (interchain with G-Cter in SUMO1) linkage. Ser-1260 is subject to Phosphoserine. The segment covering 1267–1288 (AVEEALKTSSPETREPESKGNS) has biased composition (basic and acidic residues). Thr-1274 is subject to Phosphothreonine. Ser-1276 is subject to Phosphoserine.

Belongs to the Symplekin family. As to quaternary structure, found in a heat-sensitive complex at least composed of several cleavage and polyadenylation specific and cleavage stimulation factors. Interacts with CPSF2, CPSF3 and CSTF2. Interacts (via N-terminus) with HSF1; this interaction is direct and occurs upon heat shock. Interacts with SSU72.

It is found in the cytoplasm. Its subcellular location is the cytoskeleton. The protein resides in the cell junction. The protein localises to the tight junction. It localises to the cell membrane. It is found in the nucleus. Its subcellular location is the nucleoplasm. Functionally, scaffold protein that functions as a component of a multimolecular complex involved in histone mRNA 3'-end processing. Specific component of the tight junction (TJ) plaque, but might not be an exclusively junctional component. May have a house-keeping rule. Is involved in pre-mRNA polyadenylation. Enhances SSU72 phosphatase activity. This is Symplekin (Sympk) from Mus musculus (Mouse).